We begin with the raw amino-acid sequence, 226 residues long: UPF0173 metal-dependent hydrolase Msed_2125 (226 aa).

Belongs to the UPF0173 family.

The sequence is that of UPF0173 metal-dependent hydrolase Msed_2125 from Metallosphaera sedula (strain ATCC 51363 / DSM 5348 / JCM 9185 / NBRC 15509 / TH2).